Reading from the N-terminus, the 1048-residue chain is Putative helicase/primase complex protein (1048 aa).

Residues 1025–1048 (STKEESSPTREETSSIKEKTFTET) form a disordered region.

The protein belongs to the asfivirus F1055L family.

Its function is as follows. May be involved in DNA replication. This African swine fever virus (isolate Pig/Kenya/KEN-50/1950) (ASFV) protein is Putative helicase/primase complex protein.